Consider the following 552-residue polypeptide: Dihydroxy-acid dehydratase (552 aa).

Asp-78 lines the Mg(2+) pocket. Cys-119 serves as a coordination point for [2Fe-2S] cluster. Mg(2+) contacts are provided by Asp-120 and Lys-121. The residue at position 121 (Lys-121) is an N6-carboxylysine. Residue Cys-191 coordinates [2Fe-2S] cluster. Glu-442 contributes to the Mg(2+) binding site. The Proton acceptor role is filled by Ser-468.

Belongs to the IlvD/Edd family. As to quaternary structure, homodimer. Requires [2Fe-2S] cluster as cofactor. The cofactor is Mg(2+).

The enzyme catalyses (2R)-2,3-dihydroxy-3-methylbutanoate = 3-methyl-2-oxobutanoate + H2O. It carries out the reaction (2R,3R)-2,3-dihydroxy-3-methylpentanoate = (S)-3-methyl-2-oxopentanoate + H2O. It functions in the pathway amino-acid biosynthesis; L-isoleucine biosynthesis; L-isoleucine from 2-oxobutanoate: step 3/4. Its pathway is amino-acid biosynthesis; L-valine biosynthesis; L-valine from pyruvate: step 3/4. Its function is as follows. Functions in the biosynthesis of branched-chain amino acids. Catalyzes the dehydration of (2R,3R)-2,3-dihydroxy-3-methylpentanoate (2,3-dihydroxy-3-methylvalerate) into 2-oxo-3-methylpentanoate (2-oxo-3-methylvalerate) and of (2R)-2,3-dihydroxy-3-methylbutanoate (2,3-dihydroxyisovalerate) into 2-oxo-3-methylbutanoate (2-oxoisovalerate), the penultimate precursor to L-isoleucine and L-valine, respectively. The polypeptide is Dihydroxy-acid dehydratase (Moorella thermoacetica (strain ATCC 39073 / JCM 9320)).